The primary structure comprises 118 residues: Elongin-B (118 aa).

Residue Met-1 is modified to N-acetylmethionine. Positions 1-79 (MDVFLMIRRH…QAPATVGLAF (79 aa)) constitute a Ubiquitin-like domain. Position 84 is a phosphothreonine (Thr-84). The interval 91 to 118 (EPFSSPPELPDVMKPQDSGGSANEQAVQ) is disordered. A phosphoserine mark is found at Ser-108 and Ser-111. Positions 108–118 (SGGSANEQAVQ) are enriched in polar residues.

This sequence belongs to the Elongin B family. In terms of assembly, heterotrimer of an A (ELOA, ELOA2 or ELOA3P), ELOB and ELOC subunit. The elongin BC complex interacts with EPOP; leading to recruit the elongin BC complex to Polycomb group (PcG) target genes, thereby restricting excessive activity of the PRC2/EED-EZH2 complex. Component of multiple cullin-RING E3 ubiquitin-protein ligase complexes composed of Elongin BC (ELOB and ELOC), a cullin (either CUL2 or CUL5), a catalytic subunit (either RBX1 or RNF7/RBX2), as well as a substrate adapter protein that can be either ASB2, ASB9, ASB11, KLHDC2, KLHDC3, KLHDC10, APPBP2, FEM1A, FEM1B, FEM1C, LRR1, PCMTD1, SOCS1, SOCS2, SOCS5, SPSB1, SPSB3, ELOA, VHL, WSB1 or RAB40C. As part of the Elongin BC E3 ubiquitin ligase complex; interacts with NRBP1. May also interact with DCUN1D1, DCUN1D2, DCUN1D3 and DCUN1D5. May form oligomers as a KLHDC2/KLHDC3-ELOB-ELOC complex; this interaction is autoinhibitory for the E3 ligase complex as the substrate-binding site of KLHDC2/KLHDC3 is blocked in the oligomer.

It localises to the nucleus. The protein operates within protein modification; protein ubiquitination. Its function is as follows. SIII, also known as elongin, is a general transcription elongation factor that increases the RNA polymerase II transcription elongation past template-encoded arresting sites. Subunit A is transcriptionally active and its transcription activity is strongly enhanced by binding to the dimeric complex of the SIII regulatory subunits B and C (elongin BC complex). In embryonic stem cells, the elongin BC complex is recruited by EPOP to Polycomb group (PcG) target genes in order generate genomic region that display both active and repressive chromatin properties, an important feature of pluripotent stem cells. In terms of biological role, core component of multiple cullin-2 and cullin-5-RING E3 ubiquitin-protein ligase complexes (ECS complexes), which mediate the ubiquitination of target proteins. By binding to BC-box motifs it seems to link target recruitment subunits, like VHL and members of the SOCS box family, to Cullin/RBX1 modules that activate E2 ubiquitination enzymes. Component the von Hippel-Lindau ubiquitination complex CBC(VHL). A number of ECS complexes (containing either KLHDC2, KLHDC3, KLHDC10, APPBP2, FEM1A, FEM1B or FEM1C as substrate-recognition component) are part of the DesCEND (destruction via C-end degrons) pathway, which recognizes a C-degron located at the extreme C terminus of target proteins, leading to their ubiquitination and degradation. The ECS(ASB9) complex mediates ubiquitination and degradation of CKB. As part of a multisubunit ubiquitin ligase complex, polyubiquitinates monoubiquitinated POLR2A. ECS(LRR1) ubiquitinates MCM7 and promotes CMG replisome disassembly by VCP and chromatin extraction during S-phase. As part of the ECS(RAB40C) complex, mediates ANKRD28 ubiquitination and degradation, thereby inhibiting protein phosphatase 6 (PP6) complex activity and focal adhesion assembly during cell migration. This Mus musculus (Mouse) protein is Elongin-B.